Consider the following 480-residue polypeptide: UDP-N-acetylmuramoylalanine--D-glutamate ligase (480 aa).

127-133 contacts ATP; the sequence is GTNGKTT.

This sequence belongs to the MurCDEF family.

The protein localises to the cytoplasm. The catalysed reaction is UDP-N-acetyl-alpha-D-muramoyl-L-alanine + D-glutamate + ATP = UDP-N-acetyl-alpha-D-muramoyl-L-alanyl-D-glutamate + ADP + phosphate + H(+). Its pathway is cell wall biogenesis; peptidoglycan biosynthesis. Functionally, cell wall formation. Catalyzes the addition of glutamate to the nucleotide precursor UDP-N-acetylmuramoyl-L-alanine (UMA). This Tropheryma whipplei (strain TW08/27) (Whipple's bacillus) protein is UDP-N-acetylmuramoylalanine--D-glutamate ligase.